A 240-amino-acid polypeptide reads, in one-letter code: Sugar fermentation stimulation protein homolog (240 aa).

Belongs to the SfsA family.

This is Sugar fermentation stimulation protein homolog from Pasteurella multocida (strain Pm70).